Here is a 185-residue protein sequence, read N- to C-terminus: Calcium-binding protein K-like (185 aa).

EF-hand domains lie at 60–95 (WDEASMVRMFKLFDSDGNGVIDVKEFITALYMMTRA) and 96–131 (PTTDKLGFLFDLFDSDKSGYLEAGEIEKLVNIVVVC). Ca(2+) contacts are provided by aspartate 73, aspartate 75, asparagine 77, glutamate 84, aspartate 109, aspartate 111, serine 113, tyrosine 115, and glutamate 120.

It belongs to the recoverin family.

The polypeptide is Calcium-binding protein K-like (Dictyostelium discoideum (Social amoeba)).